The chain runs to 134 residues: UPF0412 protein YaaI (134 aa).

A signal peptide spans 1-23 (MKSVFTLSASLAISLLLCCTAQA).

Belongs to the UPF0412 family.

This chain is UPF0412 protein YaaI, found in Escherichia coli (strain SMS-3-5 / SECEC).